The primary structure comprises 343 residues: Polyprenyl transferase spyF (343 aa).

8 consecutive transmembrane segments (helical) span residues 38 to 58, 62 to 82, 92 to 112, 138 to 158, 170 to 190, 241 to 261, 273 to 293, and 311 to 331; these read WLAV…SHPL, VSVW…PASI, LLCL…NDWI, GFIW…STIL, LYIY…AIGW, AYVA…GLVL, SGWL…HQLL, and FALG…SSGM.

Belongs to the UbiA prenyltransferase family. Mg(2+) is required as a cofactor.

The protein localises to the membrane. It catalyses the reaction triacetate lactone + (2E,6E,10E)-geranylgeranyl diphosphate = (2E,6E,10E)-geranylgeranyl-triacetate lactone + diphosphate. The protein operates within secondary metabolite biosynthesis; terpenoid biosynthesis. Its function is as follows. Polyprenyl transferase; part of the gene cluster that mediates the biosynthesis of meroterpenoids called sartorypyrones. Within the pathway, spyF catalyzes the prenylation of triacetic acid lactone (TAL) to produce geranylgeranyl-triacetate lactone. The biosynthesis of sartorypyrones begins with the production of triacetic acid lactone (TAL) by the NR-PKS spyA using one molecule of acetyl-CoA and two molecules of malonyl-CoA. The prenyltransferase spyF then conjugates geranylgeranyl pyrophosphate (GGPP) to TAL to form geranylgeranyl-triacetate lactone, for which the pathway-specific geranylgeranyl pyrophosphate synthase (GGPS) spyE is required to provide GGPP. Subsequently, geranylgeranyl-triacetate lactone is epoxidized at the terminal olein by the FAD-dependent monooxygenase spyC, followed by cyclization of the terpenoid component catalyzed by the terpene cyclase spyD to produce both the bicyclic sartorypyrone F and the monocyclic sartorypyrone D. Finally, the last step of the biosynthesis involves the acetylation of the meroterpenoids sartorypyrones D and F by the acetyltransferase SpyB to produce sartorypyrones A and G, respectively. The chain is Polyprenyl transferase spyF from Aspergillus fumigatus (strain ATCC MYA-4609 / CBS 101355 / FGSC A1100 / Af293) (Neosartorya fumigata).